Consider the following 315-residue polypeptide: Large ribosomal subunit protein uL10 (315 aa).

Over residues 285–294 (AAAPAASAAP) the composition is skewed to low complexity. Residues 285 to 315 (AAAPAASAAPAKEEKEESEESDDDMGFGLFD) are disordered. Residues 300-309 (EESEESDDDM) show a composition bias toward acidic residues.

It belongs to the universal ribosomal protein uL10 family. In terms of assembly, P0 forms a pentameric complex by interaction with dimers of P1 and P2. Phosphorylated.

Functionally, ribosomal protein P0 is the functional equivalent of E.coli protein L10. The polypeptide is Large ribosomal subunit protein uL10 (RPLP0) (Lithobates sylvaticus (Wood frog)).